Consider the following 84-residue polypeptide: Subtilisin-chymotrypsin inhibitor-2A (84 aa).

Positions 1-23 (MSSVEKKPEGVNTGAGDRHNLKT) are disordered.

Belongs to the protease inhibitor I13 (potato type I serine protease inhibitor) family.

In terms of biological role, inhibits both subtilisin and chymotrypsin. The protein is Subtilisin-chymotrypsin inhibitor-2A of Hordeum vulgare (Barley).